The primary structure comprises 466 residues: Asparagine--tRNA ligase (466 aa).

Belongs to the class-II aminoacyl-tRNA synthetase family. Homodimer.

The protein localises to the cytoplasm. The enzyme catalyses tRNA(Asn) + L-asparagine + ATP = L-asparaginyl-tRNA(Asn) + AMP + diphosphate + H(+). The protein is Asparagine--tRNA ligase of Idiomarina loihiensis (strain ATCC BAA-735 / DSM 15497 / L2-TR).